We begin with the raw amino-acid sequence, 100 residues long: NADH-quinone oxidoreductase subunit K (100 aa).

3 helical membrane passes run 2 to 22, 28 to 48, and 64 to 84; these read IPLSWYMALATVLFCIGVAGF, IIVMLLSLELMLNGVNLNLVA, and FVITVAACEAAVGLGIVICLF.

It belongs to the complex I subunit 4L family. As to quaternary structure, NDH-1 is composed of 14 different subunits. Subunits NuoA, H, J, K, L, M, N constitute the membrane sector of the complex.

Its subcellular location is the cell inner membrane. It catalyses the reaction a quinone + NADH + 5 H(+)(in) = a quinol + NAD(+) + 4 H(+)(out). In terms of biological role, NDH-1 shuttles electrons from NADH, via FMN and iron-sulfur (Fe-S) centers, to quinones in the respiratory chain. The immediate electron acceptor for the enzyme in this species is believed to be ubiquinone. Couples the redox reaction to proton translocation (for every two electrons transferred, four hydrogen ions are translocated across the cytoplasmic membrane), and thus conserves the redox energy in a proton gradient. This chain is NADH-quinone oxidoreductase subunit K, found in Desulfovibrio desulfuricans (strain ATCC 27774 / DSM 6949 / MB).